A 172-amino-acid chain; its full sequence is 3-hydroxydecanoyl-[acyl-carrier-protein] dehydratase (172 aa).

Residue H71 is part of the active site.

This sequence belongs to the thioester dehydratase family. FabA subfamily. In terms of assembly, homodimer.

Its subcellular location is the cytoplasm. The enzyme catalyses a (3R)-hydroxyacyl-[ACP] = a (2E)-enoyl-[ACP] + H2O. It carries out the reaction (3R)-hydroxydecanoyl-[ACP] = (2E)-decenoyl-[ACP] + H2O. It catalyses the reaction (2E)-decenoyl-[ACP] = (3Z)-decenoyl-[ACP]. It participates in lipid metabolism; fatty acid biosynthesis. In terms of biological role, necessary for the introduction of cis unsaturation into fatty acids. Catalyzes the dehydration of (3R)-3-hydroxydecanoyl-ACP to E-(2)-decenoyl-ACP and then its isomerization to Z-(3)-decenoyl-ACP. Can catalyze the dehydratase reaction for beta-hydroxyacyl-ACPs with saturated chain lengths up to 16:0, being most active on intermediate chain length. This Vibrio vulnificus (strain CMCP6) protein is 3-hydroxydecanoyl-[acyl-carrier-protein] dehydratase.